Reading from the N-terminus, the 122-residue chain is Large ribosomal subunit protein uL18 (122 aa).

It belongs to the universal ribosomal protein uL18 family. In terms of assembly, part of the 50S ribosomal subunit; part of the 5S rRNA/L5/L18/L25 subcomplex. Contacts the 5S and 23S rRNAs.

In terms of biological role, this is one of the proteins that bind and probably mediate the attachment of the 5S RNA into the large ribosomal subunit, where it forms part of the central protuberance. This Desulfitobacterium hafniense (strain Y51) protein is Large ribosomal subunit protein uL18.